Here is a 329-residue protein sequence, read N- to C-terminus: uncharacterized protein (329 aa).

Coiled-coil stretches lie at residues 57-120 and 225-251; these read KKEE…QEVT and QRQR…GNMM.

This is an uncharacterized protein from Homo sapiens (Human).